The primary structure comprises 312 residues: Ubiquinone biosynthesis O-methyltransferase, mitochondrial (312 aa).

The N-terminal 32 residues, 1 to 32 (MLLRSRFLKVIHVRKQLSACSRFAIQTQTRCK), are a transit peptide targeting the mitochondrion. S-adenosyl-L-methionine-binding residues include R68, G130, D153, and M196. The Mg(2+) site is built by E197, E200, and H201.

This sequence belongs to the class I-like SAM-binding methyltransferase superfamily. UbiG/COQ3 family. In terms of assembly, component of a multi-subunit COQ enzyme complex, composed of at least COQ3, COQ4, COQ5, COQ6, COQ7 and COQ9. Interacts directly with COQ4. It depends on Mg(2+) as a cofactor.

The protein resides in the mitochondrion inner membrane. It carries out the reaction 3,4-dihydroxy-5-(all-trans-hexaprenyl)benzoate + S-adenosyl-L-methionine = 4-hydroxy-3-methoxy-5-(all-trans-hexaprenyl)benzoate + S-adenosyl-L-homocysteine + H(+). It catalyses the reaction a 3-demethylubiquinone + S-adenosyl-L-methionine = a ubiquinone + S-adenosyl-L-homocysteine. The enzyme catalyses 3-demethylubiquinol-6 + S-adenosyl-L-methionine = ubiquinol-6 + S-adenosyl-L-homocysteine + H(+). Its pathway is cofactor biosynthesis; ubiquinone biosynthesis. With respect to regulation, regulated in response to catabolite repression. O-methyltransferase required for two non-consecutive steps during ubiquinone biosynthesis. Catalyzes the 2 O-methylation of 3,4-dihydroxy-5-(all-trans-hexaprenyl)benzoic acid into 4-hydroxy-3-methoxy-5-(all-trans-hexaprenyl)benzoic acid. Also catalyzes the last step of ubiquinone biosynthesis by mediating methylation of 3-demethylubiquinone into ubiquinone. Also able to mediate the methylation of 3-demethylubiquinol-6 into ubiquinol-6. This is Ubiquinone biosynthesis O-methyltransferase, mitochondrial from Saccharomyces cerevisiae (strain ATCC 204508 / S288c) (Baker's yeast).